We begin with the raw amino-acid sequence, 485 residues long: Poly(ADP-ribose) glycohydrolase 2 (485 aa).

It belongs to the poly(ADP-ribose) glycohydrolase family. In terms of tissue distribution, expressed in head and tail neurons.

The protein resides in the cytoplasm. The catalysed reaction is [(1''-&gt;2')-ADP-alpha-D-ribose](n) + H2O = [(1''-&gt;2')-ADP-alpha-D-ribose](n-1) + ADP-D-ribose. In terms of biological role, poly(ADP-ribose) synthesized after DNA damage is only present transiently and is rapidly degraded by poly(ADP-ribose) glycohydrolase. Poly(ADP-ribose) metabolism may be required for maintenance of the normal function of neuronal cells. The protein is Poly(ADP-ribose) glycohydrolase 2 of Caenorhabditis elegans.